Consider the following 151-residue polypeptide: Small ribosomal subunit protein uS15 (151 aa).

K27 carries the post-translational modification N6-acetyllysine; alternate. The residue at position 27 (K27) is an N6-succinyllysine; alternate. Residue K27 forms a Glycyl lysine isopeptide (Lys-Gly) (interchain with G-Cter in ubiquitin) linkage. The residue at position 30 (S30) is a Phosphoserine. K34 is subject to N6-succinyllysine. Y38 is modified (phosphotyrosine). K43 is covalently cross-linked (Glycyl lysine isopeptide (Lys-Gly) (interchain with G-Cter in SUMO2)).

This sequence belongs to the universal ribosomal protein uS15 family. In terms of assembly, component of the small ribosomal subunit. Part of the small subunit (SSU) processome, composed of more than 70 proteins and the RNA chaperone small nucleolar RNA (snoRNA) U3. Post-translationally, ubiquitinated at Lys-27 by RNF14 and RNF25 in response to ribosome collisions (ribosome stalling).

The protein resides in the cytoplasm. It is found in the nucleus. The protein localises to the nucleolus. In terms of biological role, component of the small ribosomal subunit. The ribosome is a large ribonucleoprotein complex responsible for the synthesis of proteins in the cell. Part of the small subunit (SSU) processome, first precursor of the small eukaryotic ribosomal subunit. During the assembly of the SSU processome in the nucleolus, many ribosome biogenesis factors, an RNA chaperone and ribosomal proteins associate with the nascent pre-rRNA and work in concert to generate RNA folding, modifications, rearrangements and cleavage as well as targeted degradation of pre-ribosomal RNA by the RNA exosome. The polypeptide is Small ribosomal subunit protein uS15 (RPS13) (Cricetulus griseus (Chinese hamster)).